The sequence spans 167 residues: Crossover junction endodeoxyribonuclease RuvC (167 aa).

Catalysis depends on residues aspartate 11, glutamate 71, and aspartate 143. Positions 11, 71, and 143 each coordinate Mg(2+).

Belongs to the RuvC family. In terms of assembly, homodimer which binds Holliday junction (HJ) DNA. The HJ becomes 2-fold symmetrical on binding to RuvC with unstacked arms; it has a different conformation from HJ DNA in complex with RuvA. In the full resolvosome a probable DNA-RuvA(4)-RuvB(12)-RuvC(2) complex forms which resolves the HJ. It depends on Mg(2+) as a cofactor.

Its subcellular location is the cytoplasm. The catalysed reaction is Endonucleolytic cleavage at a junction such as a reciprocal single-stranded crossover between two homologous DNA duplexes (Holliday junction).. The RuvA-RuvB-RuvC complex processes Holliday junction (HJ) DNA during genetic recombination and DNA repair. Endonuclease that resolves HJ intermediates. Cleaves cruciform DNA by making single-stranded nicks across the HJ at symmetrical positions within the homologous arms, yielding a 5'-phosphate and a 3'-hydroxyl group; requires a central core of homology in the junction. The consensus cleavage sequence is 5'-(A/T)TT(C/G)-3'. Cleavage occurs on the 3'-side of the TT dinucleotide at the point of strand exchange. HJ branch migration catalyzed by RuvA-RuvB allows RuvC to scan DNA until it finds its consensus sequence, where it cleaves and resolves the cruciform DNA. In Acidiphilium cryptum (strain JF-5), this protein is Crossover junction endodeoxyribonuclease RuvC.